The sequence spans 247 residues: Protein Thf1 (247 aa).

Positions 198–224 form a coiled coil; the sequence is IAQVRQAMDDILEAQKKRREADQAKKE. A disordered region spans residues 209 to 247; that stretch reads LEAQKKRREADQAKKEGSDDTPTTEASTPDSEPTSEVSS. The span at 210–226 shows a compositional bias: basic and acidic residues; sequence EAQKKRREADQAKKEGS. Positions 228–247 are enriched in polar residues; it reads DTPTTEASTPDSEPTSEVSS.

It belongs to the THF1 family.

Its function is as follows. May be involved in photosynthetic membrane biogenesis. The chain is Protein Thf1 from Acaryochloris marina (strain MBIC 11017).